Here is an 880-residue protein sequence, read N- to C-terminus: Translation initiation factor IF-2 (880 aa).

Disordered stretches follow at residues 51–78, 93–116, and 142–293; these read KQHG…GSTG, YVKR…QAAN, and KEAD…FEKP. Polar residues predominate over residues 69–78; that stretch reads STLNVKGSTG. A compositionally biased stretch (basic and acidic residues) spans 142-229; the sequence is KEADEKAKKA…ARKKAAEGGD (88 aa). Residues 269–279 are compositionally biased toward basic residues; it reads GRRTRRGKKQR. A tr-type G domain is found at 380–549; it reads SRAPVVTIMG…LLQAEMLDLS (170 aa). The interval 389 to 396 is G1; sequence GHVDHGKT. Residue 389–396 participates in GTP binding; sequence GHVDHGKT. Positions 414 to 418 are G2; it reads GITQH. Positions 435–438 are G3; it reads DTPG. GTP is bound by residues 435–439 and 489–492; these read DTPGH and NKID. The segment at 489–492 is G4; sequence NKID. A G5 region spans residues 525–527; it reads SAK.

It belongs to the TRAFAC class translation factor GTPase superfamily. Classic translation factor GTPase family. IF-2 subfamily.

The protein resides in the cytoplasm. In terms of biological role, one of the essential components for the initiation of protein synthesis. Protects formylmethionyl-tRNA from spontaneous hydrolysis and promotes its binding to the 30S ribosomal subunits. Also involved in the hydrolysis of GTP during the formation of the 70S ribosomal complex. The protein is Translation initiation factor IF-2 of Psychromonas ingrahamii (strain DSM 17664 / CCUG 51855 / 37).